Consider the following 281-residue polypeptide: Small ribosomal subunit protein uS3 (281 aa).

A KH type-2 domain is found at 38 to 106 (IRRLLSTGLE…QVQLNILEVK (69 aa)). Residues 218-281 (APAGAERARR…VTHEPQIAES (64 aa)) form a disordered region. Residues 238 to 256 (SGAAGTTVTGTDAGRAVGG) are compositionally biased toward low complexity.

This sequence belongs to the universal ribosomal protein uS3 family. Part of the 30S ribosomal subunit. Forms a tight complex with proteins S10 and S14.

In terms of biological role, binds the lower part of the 30S subunit head. Binds mRNA in the 70S ribosome, positioning it for translation. The protein is Small ribosomal subunit protein uS3 of Mycobacterium leprae (strain Br4923).